A 62-amino-acid chain; its full sequence is MAKCAICEKGVTVGIKLSHSHIRTKRTWNPNLQRVKAIVDGSPKRIMVCTRCLRSGKVQRAI.

It belongs to the bacterial ribosomal protein bL28 family.

In Desulforamulus reducens (strain ATCC BAA-1160 / DSM 100696 / MI-1) (Desulfotomaculum reducens), this protein is Large ribosomal subunit protein bL28.